The primary structure comprises 244 residues: Tabinhibitin 8 (244 aa).

Residues 1-23 (MTSILVSRFKISALTLQYATSDS) form the signal peptide. The SCP domain occupies 67 to 194 (YTGGGIIVLR…KTPLFFSSNC (128 aa)). A Cell attachment site motif is present at residues 143-145 (RGD).

It belongs to the CRISP family. Expressed in salivary glands.

It localises to the secreted. Inhibits platelet aggregation induced by all agonists tested (ADP, arachidonic acid, the thromboxane A2 analog U46619, thrombin, and snake venom snaclecs (TMVA that activates platelet through GPIB, and stejnulxin that specifically acts through GPVI (GP6))). May act by competing with fibrinogen for binding to glycoprotein IIb/IIIa (ITGA2B/ITGB3). This Tabanus yao (Horsefly) protein is Tabinhibitin 8.